The chain runs to 495 residues: B3 domain-containing protein Os01g0234100 (495 aa).

Disordered stretches follow at residues M1 to Q25 and P88 to E108. Positions Q92–E108 are enriched in polar residues. Residues F152–K243 constitute a DNA-binding region (TF-B3). Residues E268 to T282 are compositionally biased toward basic and acidic residues. Residues E268–V289 are disordered.

It is found in the nucleus. This is B3 domain-containing protein Os01g0234100 from Oryza sativa subsp. japonica (Rice).